A 431-amino-acid chain; its full sequence is MAGEVEGEGCRVSWGVLVALLLLPLPSLCSLTAGKQLQVIKLFEGRVVRYNESKNFCYQRTYEPKWSDVWTKIQIRVNSTKMIRVTQVENEEKLKEMETFNMFDFFSSFLKEKLNDSFIYVDLYNNKTCIKVHVSDTDTYYSVALSRGFDPRLFFVFLCGLLLFFYGDTLSRSQIFYYSTGITVGMLASMLILVFMLSKLMPKKSPFVALLLGGWSVSIYVIQLVFKNLQAICTEYWQYLLGYLGIVGFVSFAFCYKYGPLENERSINILNWTLQLIGLLLMYISVQIRHIAVTMVVIAFCTKQIEYPVRWIYILYRKIKLKRGKPSPPRLLTEEEYRKQGDVETRKALEELRGYCSSPDFAAWKTVSRIQSPKRFADFVEGSSHLTPNEVSVHEHEYGFGGSFLEDELFGEDSDVEEEMEIEPVLYQDLR.

The signal sequence occupies residues Met1 to Cys29. The next 5 membrane-spanning stretches (helical) occupy residues Pro151 to Ser171, Ile175 to Phe195, Pro206 to Phe226, Tyr236 to Tyr256, and Ser266 to Val286. The segment at Phe176–Gln287 is a; required for its colocalization with lamins at the nuclear envelope. A Nuclear localization signal motif is present at residues Arg317–Lys325. The tract at residues Pro326–Glu395 is b; required for interaction with ran. The tract at residues Pro326–Arg431 is interaction with banf1-a and banf1-b. The interval Ser368 to Arg375 is BAF-binding site (BBS); essential for interaction with banf1-a, banf1-b and ran.

It belongs to the NEMP family. Homooligomer. Interacts with banf1-a and banf1-b. Interacts with ran-gtp. In terms of processing, phosphorylated.

Its subcellular location is the nucleus inner membrane. The protein localises to the nucleus envelope. In concert with ran, required for proper eye development. May be involved in the expression of early eye marker genes. Contributes to nuclear envelope stiffness in germ cells. Required for fertility. Essential for normal erythropoiesis. Required for efficient nuclear envelope opening and enucleation during the late stages of erythroblast maturation. The polypeptide is Nuclear envelope integral membrane protein 1 (nemp1) (Xenopus tropicalis (Western clawed frog)).